Reading from the N-terminus, the 377-residue chain is Alanine racemase (377 aa).

Lysine 37 acts as the Proton acceptor; specific for D-alanine in catalysis. Lysine 37 is subject to N6-(pyridoxal phosphate)lysine. Arginine 135 contacts substrate. The active-site Proton acceptor; specific for L-alanine is tyrosine 271. Residue methionine 319 participates in substrate binding.

The protein belongs to the alanine racemase family. Pyridoxal 5'-phosphate is required as a cofactor.

The catalysed reaction is L-alanine = D-alanine. Its pathway is amino-acid biosynthesis; D-alanine biosynthesis; D-alanine from L-alanine: step 1/1. Functionally, catalyzes the interconversion of L-alanine and D-alanine. May also act on other amino acids. The chain is Alanine racemase (alr) from Helicobacter pylori (strain HPAG1).